We begin with the raw amino-acid sequence, 107 residues long: uncharacterized protein (107 aa).

Residues 37–59 form a helical membrane-spanning segment; that stretch reads MVFSFLTVMPGDFIKCLFLRFFV.

The protein localises to the membrane. This is an uncharacterized protein from Saccharomyces cerevisiae (strain ATCC 204508 / S288c) (Baker's yeast).